The primary structure comprises 471 residues: N(6)-adenine-specific methyltransferase METTL4 (471 aa).

It belongs to the MT-A70-like family.

It is found in the nucleus. It catalyses the reaction a 2'-O-methyladenosine in U2 snRNA + S-adenosyl-L-methionine = an N(6)-methyl-2'-O-methyladenosine in U2 snRNA + S-adenosyl-L-homocysteine + H(+). The catalysed reaction is a 2'-deoxyadenosine in DNA + S-adenosyl-L-methionine = an N(6)-methyl-2'-deoxyadenosine in DNA + S-adenosyl-L-homocysteine + H(+). In terms of biological role, n(6)-adenine-specific methyltransferase that can methylate both RNAs and DNA. Acts as a N(6)-adenine-specific RNA methyltransferase by catalyzing formation of N6,2'-O-dimethyladenosine (m6A(m)) on internal positions of U2 small nuclear RNA (snRNA): methylates the 6th position of adenine residues with a pre-deposited 2'-O-methylation. Internal m6A(m) methylation of snRNAs regulates RNA splicing. Also able to act as a N(6)-adenine-specific DNA methyltransferase by mediating methylation of DNA on the 6th position of adenine (N(6)-methyladenosine). The existence of N(6)-methyladenosine (m6A) on DNA is however unclear in mammals, and additional evidences are required to confirm the role of the N(6)-adenine-specific DNA methyltransferase activity of METTL4 in vivo. Acts as a regulator of mitochondrial transcript levels and mitochondrial DNA (mtDNA) copy number by mediating mtDNA N(6)-methylation: m6A on mtDNA reduces transcription by repressing TFAM DNA-binding and bending. N(6)-methyladenosine deposition by METTL4 regulates Polycomb silencing by triggering ubiquitination and degradation of sensor proteins ASXL1 and MPND, leading to inactivation of the PR-DUB complex and subsequent preservation of Polycomb silencing. The chain is N(6)-adenine-specific methyltransferase METTL4 from Mus musculus (Mouse).